The sequence spans 89 residues: Large ribosomal subunit protein eL34 (89 aa).

Residues 1-22 are disordered; it reads MPAPRYKSGSSKKVYRKAPGNS.

The protein belongs to the eukaryotic ribosomal protein eL34 family.

This chain is Large ribosomal subunit protein eL34, found in Methanococcus maripaludis (strain DSM 14266 / JCM 13030 / NBRC 101832 / S2 / LL).